We begin with the raw amino-acid sequence, 643 residues long: Thioredoxin reductase 3 (643 aa).

The disordered stretch occupies residues 1 to 53 (MERSPPQSPGPGKAGDAPNRRSGHVRGARVLSPPGRRARLSSPGPSRSSEARE). Asymmetric dimethylarginine; alternate is present on Arg26. The residue at position 26 (Arg26) is an Omega-N-methylarginine; alternate. A phosphoserine mark is found at Ser41 and Ser42. Residues 56–156 (RRHLVGLIER…KLLQEDLAYD (101 aa)) enclose the Glutaredoxin domain. An FAD-binding site is contributed by 158 to 187 (DLIIIGGGSGGLSCAKEAAILGKKVMVLDF). Residues Cys203 and Cys208 are joined by a disulfide bond. An N6-succinyllysine modification is found at Lys379. His616 (proton acceptor) is an active-site residue. The segment at residues 641–642 (CU) is a cross-link (cysteinyl-selenocysteine (Cys-Sec)). Sec642 is a non-standard amino acid (selenocysteine).

The protein belongs to the class-I pyridine nucleotide-disulfide oxidoreductase family. Homodimer. Requires FAD as cofactor.

Its subcellular location is the cytoplasm. It localises to the nucleus. The protein localises to the microsome. It is found in the endoplasmic reticulum. It carries out the reaction [thioredoxin]-dithiol + NADP(+) = [thioredoxin]-disulfide + NADPH + H(+). In terms of biological role, displays thioredoxin reductase, glutaredoxin and glutathione reductase activities. Catalyzes disulfide bond isomerization. Promotes disulfide bond formation between GPX4 and various sperm proteins and may play a role in sperm maturation by promoting formation of sperm structural components. In Homo sapiens (Human), this protein is Thioredoxin reductase 3.